A 710-amino-acid chain; its full sequence is Ent-copalyl diphosphate synthase 1 (710 aa).

K145 provides a ligand contact to substrate. D277 and D279 together coordinate Mg(2+). Positions 277–280 (DIDD) match the DXDD motif motif. K364 is a binding site for substrate.

It belongs to the terpene synthase family. Tpsc subfamily. It depends on Mg(2+) as a cofactor. Expressed in germinating seeds and leaves.

It carries out the reaction (2E,6E,10E)-geranylgeranyl diphosphate = ent-copalyl diphosphate. It functions in the pathway plant hormone biosynthesis; gibberellin biosynthesis. It participates in secondary metabolite biosynthesis; terpenoid biosynthesis. Its function is as follows. Involved in the biosynthesis of ent-kaurene diterpenoids natural products such as oridonin, miltiradiene, eriocalyxin B and nezukol, known to exhibit antitumor, anti-inflammatory and antibacterial activities, and in the production of gibberellins phytohormones. Catalyzes the conversion of (2E,6E,10E)-geranylgeranyl diphosphate (GGPP) to ent-copalyl diphosphate (ent-CPP). This chain is Ent-copalyl diphosphate synthase 1, found in Isodon eriocalyx (Plectranthus eriocalyx).